The following is a 344-amino-acid chain: Holliday junction branch migration complex subunit RuvB (344 aa).

The segment at 1 to 183 (MLDERLISSH…FGISCRLDFY (183 aa)) is large ATPase domain (RuvB-L). Residues Ile22, Arg23, Gly64, Lys67, Thr68, Thr69, 130–132 (EDY), Arg173, Tyr183, and Arg220 each bind ATP. Thr68 is a binding site for Mg(2+). A small ATPAse domain (RuvB-S) region spans residues 184–254 (TPLELSEIIL…LAKWALEMLE (71 aa)). The interval 257 to 344 (ECGLDVMDRM…LEGKGLFSDA (88 aa)) is head domain (RuvB-H). 2 residues coordinate DNA: Lys312 and Arg317.

Belongs to the RuvB family. As to quaternary structure, homohexamer. Forms an RuvA(8)-RuvB(12)-Holliday junction (HJ) complex. HJ DNA is sandwiched between 2 RuvA tetramers; dsDNA enters through RuvA and exits via RuvB. An RuvB hexamer assembles on each DNA strand where it exits the tetramer. Each RuvB hexamer is contacted by two RuvA subunits (via domain III) on 2 adjacent RuvB subunits; this complex drives branch migration. In the full resolvosome a probable DNA-RuvA(4)-RuvB(12)-RuvC(2) complex forms which resolves the HJ.

It is found in the cytoplasm. The catalysed reaction is ATP + H2O = ADP + phosphate + H(+). In terms of biological role, the RuvA-RuvB-RuvC complex processes Holliday junction (HJ) DNA during genetic recombination and DNA repair, while the RuvA-RuvB complex plays an important role in the rescue of blocked DNA replication forks via replication fork reversal (RFR). RuvA specifically binds to HJ cruciform DNA, conferring on it an open structure. The RuvB hexamer acts as an ATP-dependent pump, pulling dsDNA into and through the RuvAB complex. RuvB forms 2 homohexamers on either side of HJ DNA bound by 1 or 2 RuvA tetramers; 4 subunits per hexamer contact DNA at a time. Coordinated motions by a converter formed by DNA-disengaged RuvB subunits stimulates ATP hydrolysis and nucleotide exchange. Immobilization of the converter enables RuvB to convert the ATP-contained energy into a lever motion, pulling 2 nucleotides of DNA out of the RuvA tetramer per ATP hydrolyzed, thus driving DNA branch migration. The RuvB motors rotate together with the DNA substrate, which together with the progressing nucleotide cycle form the mechanistic basis for DNA recombination by continuous HJ branch migration. Branch migration allows RuvC to scan DNA until it finds its consensus sequence, where it cleaves and resolves cruciform DNA. This is Holliday junction branch migration complex subunit RuvB from Syntrophomonas wolfei subsp. wolfei (strain DSM 2245B / Goettingen).